The sequence spans 267 residues: Heme-containing CO-sensing transcriptional regulator RcoM 2 (267 aa).

Residues 15-86 form the PAS domain; sequence RAETFQHKLE…KSRDKLRFLL (72 aa). The heme site is built by histidine 74 and methionine 104. Residues 161–266 form the HTH LytTR-type domain; it reads IPVYRKSRVI…TAQLKELLGV (106 aa).

It depends on heme as a cofactor.

The protein localises to the cytoplasm. Its function is as follows. One-component, b-type heme-containing aerobic sensor and transcriptional regulator that responds to CO by activating the expression of the oxidation operon cox. The polypeptide is Heme-containing CO-sensing transcriptional regulator RcoM 2 (rcoM2) (Paraburkholderia xenovorans (strain LB400)).